Here is a 513-residue protein sequence, read N- to C-terminus: ATP synthase subunit alpha (513 aa).

169–176 (GDRQTGKT) contacts ATP.

It belongs to the ATPase alpha/beta chains family. F-type ATPases have 2 components, CF(1) - the catalytic core - and CF(0) - the membrane proton channel. CF(1) has five subunits: alpha(3), beta(3), gamma(1), delta(1), epsilon(1). CF(0) has three main subunits: a(1), b(2) and c(9-12). The alpha and beta chains form an alternating ring which encloses part of the gamma chain. CF(1) is attached to CF(0) by a central stalk formed by the gamma and epsilon chains, while a peripheral stalk is formed by the delta and b chains.

It is found in the cell inner membrane. The catalysed reaction is ATP + H2O + 4 H(+)(in) = ADP + phosphate + 5 H(+)(out). Its function is as follows. Produces ATP from ADP in the presence of a proton gradient across the membrane. The alpha chain is a regulatory subunit. In Actinobacillus pleuropneumoniae serotype 3 (strain JL03), this protein is ATP synthase subunit alpha.